The following is a 302-amino-acid chain: Flavin-dependent thymidylate synthase (302 aa).

In terms of domain architecture, ThyX spans 43-257 (GFVRVIDYMG…PFAYKAFEDY (215 aa)). FAD-binding positions include threonine 89, 112–114 (RHR), and glutamate 120. DUMP is bound by residues 109–112 (QWIR), 120–124 (EYSAR), and arginine 196. The short motif at 112–122 (RHRTANVNEYS) is the ThyX motif element. Residues 212 to 214 (DLH) and histidine 218 each bind FAD. Arginine 223 is a binding site for dUMP. Arginine 223 acts as the Involved in ionization of N3 of dUMP, leading to its activation in catalysis.

This sequence belongs to the thymidylate synthase ThyX family. In terms of assembly, homotetramer. It depends on FAD as a cofactor.

It catalyses the reaction dUMP + (6R)-5,10-methylene-5,6,7,8-tetrahydrofolate + NADPH + H(+) = dTMP + (6S)-5,6,7,8-tetrahydrofolate + NADP(+). The protein operates within pyrimidine metabolism; dTTP biosynthesis. In terms of biological role, catalyzes the reductive methylation of 2'-deoxyuridine-5'-monophosphate (dUMP) to 2'-deoxythymidine-5'-monophosphate (dTMP) while utilizing 5,10-methylenetetrahydrofolate (mTHF) as the methyl donor, and NADPH and FADH(2) as the reductant. The polypeptide is Flavin-dependent thymidylate synthase (Ruegeria pomeroyi (strain ATCC 700808 / DSM 15171 / DSS-3) (Silicibacter pomeroyi)).